A 216-amino-acid chain; its full sequence is Fibroblast growth factor 17 (216 aa).

Positions 1 to 22 are cleaved as a signal peptide; sequence MGAARLLPNLTLCLQLLILCCQ. N-linked (GlcNAc...) asparagine glycosylation occurs at N137. The disordered stretch occupies residues 195–216; sequence FEFVGSAPTRRTKRTRRPQSQT. Basic residues predominate over residues 204 to 216; the sequence is RRTKRTRRPQSQT.

Belongs to the heparin-binding growth factors family. Interacts with FGFR3 and FGFR4.

The protein localises to the secreted. Plays an important role in the regulation of embryonic development and as signaling molecule in the induction and patterning of the embryonic brain. Required for normal brain development. The sequence is that of Fibroblast growth factor 17 (Fgf17) from Mus musculus (Mouse).